The primary structure comprises 628 residues: UvrABC system protein C (628 aa).

The GIY-YIG domain occupies 20 to 99 (TSAGVYLMRD…IKTHKPRYNV (80 aa)). One can recognise a UVR domain in the interval 209 to 244 (AELLAQLEDQMQTAAAAMNFEHAARLRDRITGLNQL).

This sequence belongs to the UvrC family. In terms of assembly, interacts with UvrB in an incision complex.

Its subcellular location is the cytoplasm. Functionally, the UvrABC repair system catalyzes the recognition and processing of DNA lesions. UvrC both incises the 5' and 3' sides of the lesion. The N-terminal half is responsible for the 3' incision and the C-terminal half is responsible for the 5' incision. This Gloeobacter violaceus (strain ATCC 29082 / PCC 7421) protein is UvrABC system protein C.